A 407-amino-acid polypeptide reads, in one-letter code: Phosphonoacetate hydrolase (407 aa).

The Zn(2+) site is built by Asp-25, Thr-64, Asp-202, His-206, Asp-241, His-242, and His-368. Residues Thr-64 and Asp-202 each contribute to the substrate site. Substrate contacts are provided by His-242 and His-368.

Belongs to the alkaline phosphatase family. PhnA subfamily. Homodimer. Requires Zn(2+) as cofactor.

The catalysed reaction is phosphonoacetate + H2O = acetate + phosphate + H(+). Functionally, specifically hydrolyzes phosphonoacetate. Does not have activity on other organophosphonates or acetates. In Pseudomonas putida (Arthrobacter siderocapsulatus), this protein is Phosphonoacetate hydrolase.